The chain runs to 341 residues: GTPase Obg (341 aa).

The Obg domain occupies 1 to 159; sequence MKFLDQAKVY…RAIWLRLKLI (159 aa). The region spanning 160–327 is the OBG-type G domain; it reads ADAGLVGLPN…VLRAGAHIIE (168 aa). GTP contacts are provided by residues 166–173, 191–195, 212–215, 279–282, and 308–310; these read GLPNAGKS, FTTLH, DIPG, SQID, and SAV. Positions 173 and 193 each coordinate Mg(2+).

The protein belongs to the TRAFAC class OBG-HflX-like GTPase superfamily. OBG GTPase family. In terms of assembly, monomer. Requires Mg(2+) as cofactor.

The protein resides in the cytoplasm. In terms of biological role, an essential GTPase which binds GTP, GDP and possibly (p)ppGpp with moderate affinity, with high nucleotide exchange rates and a fairly low GTP hydrolysis rate. Plays a role in control of the cell cycle, stress response, ribosome biogenesis and in those bacteria that undergo differentiation, in morphogenesis control. This chain is GTPase Obg, found in Bartonella tribocorum (strain CIP 105476 / IBS 506).